The following is an 85-amino-acid chain: Sec-independent protein translocase protein TatA (85 aa).

A helical membrane pass occupies residues 1–21 (MGIFDWKHWLIILIVVVLVFG). The tract at residues 43-85 (VNTEEGENRPAEPQTGTSAGDTLNKTQTIEGQAQKVDTPVRKD) is disordered. Residues 56-73 (QTGTSAGDTLNKTQTIEG) show a composition bias toward polar residues.

Belongs to the TatA/E family. In terms of assembly, the Tat system comprises two distinct complexes: a TatABC complex, containing multiple copies of TatA, TatB and TatC subunits, and a separate TatA complex, containing only TatA subunits. Substrates initially bind to the TatABC complex, which probably triggers association of the separate TatA complex to form the active translocon.

It localises to the cell inner membrane. Its function is as follows. Part of the twin-arginine translocation (Tat) system that transports large folded proteins containing a characteristic twin-arginine motif in their signal peptide across membranes. TatA could form the protein-conducting channel of the Tat system. The protein is Sec-independent protein translocase protein TatA of Azotobacter vinelandii (strain DJ / ATCC BAA-1303).